Consider the following 57-residue polypeptide: Large ribosomal subunit protein bL32A (57 aa).

Positions 1–22 (MAVPARRTSKTKKRLRRTHEKL) are disordered. The span at 7–20 (RTSKTKKRLRRTHE) shows a compositional bias: basic residues.

This sequence belongs to the bacterial ribosomal protein bL32 family.

The protein is Large ribosomal subunit protein bL32A (rpmF1) of Enterococcus faecalis (strain ATCC 700802 / V583).